The primary structure comprises 315 residues: Fe(3+)-citrate-binding protein YfmC (315 aa).

The N-terminal stretch at 1–18 (MRTYSNKLIAIMSVLLLA) is a signal peptide. C19 is lipidated: N-palmitoyl cysteine. C19 is lipidated: S-diacylglycerol cysteine. The segment covering 27–36 (SSQNNNGSGK) has biased composition (low complexity). A disordered region spans residues 27 to 52 (SSQNNNGSGKSESKDSRVIHDEEGKT). A compositionally biased stretch (basic and acidic residues) spans 37–51 (SESKDSRVIHDEEGK). The region spanning 60 to 315 (RVVVLELSFL…KDVLKKVYNK (256 aa)) is the Fe/B12 periplasmic-binding domain.

It belongs to the bacterial solute-binding protein 8 family. In terms of assembly, the complex is composed of one ATP-binding protein (YfmF), two transmembrane proteins (YfmD and YfmE) and a solute-binding protein (YfmC).

The protein resides in the cell membrane. Functionally, part of the ABC transporter complex YfmCDEF involved in citrate-dependent Fe(3+) import. Binds citrate-dependent Fe(3+) and delivers it to the surface of YfmDE. The protein is Fe(3+)-citrate-binding protein YfmC (yfmC) of Bacillus subtilis (strain 168).